Consider the following 417-residue polypeptide: MISLNLSPSLNPGLLHKTRTCQQPTRLSALLVTNPKPFNHRHPLGLSPIPNLQIRDVSAKPLLSLTNPESSSGFSRKPRSIAAVGSSDSNPDEKSDLGEAEKKEKKAKTLQLGIVFGLWYFQNIVFNIFNKKALNVFPYPWLLASFQLFAGSIWMLVLWSFKLYPCPKISKPFIIALLGPALFHTIGHISACVSFSKVAVSFTHVIKSAEPVFSVIFSSLLGDSYPLAVWLSILPIVMGCSLAAVTEVSFNLGGLSGAMISNVGFVLRNIYSKRSLQSFKEIDGLNLYGCISILSLLYLFPVAIFVEGSHWVPGYHKAIASVGTPSTFYFWVLLSGVFYHLYNQSSYQALDEISPLTFSVGNTMKRVVVIISTVLVFRNPVRPLNALGSAIAIFGTFLYSQATAKKKKIEVGGDKKN.

The N-terminal 82 residues, 1–82, are a transit peptide targeting the chloroplast; it reads MISLNLSPSL…GFSRKPRSIA (82 aa). Residues 66–102 form a disordered region; the sequence is TNPESSSGFSRKPRSIAAVGSSDSNPDEKSDLGEAEK. At Ala83 the chain carries N-acetylalanine. Residues 91-102 show a composition bias toward basic and acidic residues; the sequence is PDEKSDLGEAEK. The next 9 membrane-spanning stretches (helical) occupy residues 109-129, 141-161, 173-193, 198-218, 225-245, 247-267, 287-307, 318-338, and 384-404; these read TLQLGIVFGLWYFQNIVFNIF, WLLASFQLFAGSIWMLVLWSF, FIIALLGPALFHTIGHISACV, VAVSFTHVIKSAEPVFSVIFS, YPLAVWLSILPIVMGCSLAAV, EVSFNLGGLSGAMISNVGFVL, LYGCISILSLLYLFPVAIFVE, AIASVGTPSTFYFWVLLSGVF, and LNALGSAIAIFGTFLYSQATA. The EamA domain occupies 127–243; the sequence is NIFNKKALNV…LPIVMGCSLA (117 aa).

Belongs to the TPT transporter family. TPT (TC 2.A.7.9) subfamily. In terms of tissue distribution, widely expressed.

The protein resides in the plastid. The protein localises to the chloroplast membrane. Its function is as follows. Sugar phosphate/phosphate translocator that transports inorganic phosphate, triose phosphate, 3-phosphoglycerate, xylulose 5-phosphate (Xul-5-P) and to a lesser extent ribulose 5-phosphate. Does not transport ribose 5-phosphate or hexose phosphates. Provides cytosolic Xul-5-P to the chloroplast, where it is used as an intermediate in the plastidic pentose phosphate pathways. This is Xylulose 5-phosphate/phosphate translocator, chloroplastic (XPT) from Arabidopsis thaliana (Mouse-ear cress).